A 417-amino-acid chain; its full sequence is Bifunctional thiamine biosynthesis protein ThiDN (417 aa).

The interval M1–P235 is hydroxymethylpyrimidine/phosphomethylpyrimidine kinase. A 4-amino-5-hydroxymethyl-2-methylpyrimidine-binding site is contributed by Q41. The tract at residues T236–M417 is thiamine-phosphate synthase.

This sequence in the N-terminal section; belongs to the ThiD family. It in the C-terminal section; belongs to the ThiN family.

It catalyses the reaction 4-amino-5-hydroxymethyl-2-methylpyrimidine + ATP = 4-amino-2-methyl-5-(phosphooxymethyl)pyrimidine + ADP + H(+). It carries out the reaction 4-amino-2-methyl-5-(phosphooxymethyl)pyrimidine + ATP = 4-amino-2-methyl-5-(diphosphooxymethyl)pyrimidine + ADP. The catalysed reaction is 2-[(2R,5Z)-2-carboxy-4-methylthiazol-5(2H)-ylidene]ethyl phosphate + 4-amino-2-methyl-5-(diphosphooxymethyl)pyrimidine + 2 H(+) = thiamine phosphate + CO2 + diphosphate. The enzyme catalyses 2-(2-carboxy-4-methylthiazol-5-yl)ethyl phosphate + 4-amino-2-methyl-5-(diphosphooxymethyl)pyrimidine + 2 H(+) = thiamine phosphate + CO2 + diphosphate. It catalyses the reaction 4-methyl-5-(2-phosphooxyethyl)-thiazole + 4-amino-2-methyl-5-(diphosphooxymethyl)pyrimidine + H(+) = thiamine phosphate + diphosphate. Its pathway is cofactor biosynthesis; thiamine diphosphate biosynthesis; 4-amino-2-methyl-5-diphosphomethylpyrimidine from 5-amino-1-(5-phospho-D-ribosyl)imidazole. The protein operates within cofactor biosynthesis; thiamine diphosphate biosynthesis; thiamine phosphate from 4-amino-2-methyl-5-diphosphomethylpyrimidine and 4-methyl-5-(2-phosphoethyl)-thiazole: step 1/1. Its function is as follows. Catalyzes the phosphorylation of hydroxymethylpyrimidine phosphate (HMP-P) to HMP-PP, and of HMP to HMP-P. Condenses 4-methyl-5-(beta-hydroxyethyl)thiazole monophosphate (THZ-P) and 4-amino-5-hydroxymethyl pyrimidine pyrophosphate (HMP-PP) to form thiamine monophosphate (TMP). This is Bifunctional thiamine biosynthesis protein ThiDN (thiDN) from Methanocaldococcus jannaschii (strain ATCC 43067 / DSM 2661 / JAL-1 / JCM 10045 / NBRC 100440) (Methanococcus jannaschii).